A 560-amino-acid polypeptide reads, in one-letter code: Membrane protein insertase YidC (560 aa).

The helical transmembrane segment at 1–21 threads the bilayer; that stretch reads MDIKRTILIAALAIVSYVMVL. The tract at residues 42–66 is disordered; that stretch reads VAPGLPDGVPAANNGASADVPSANA. Helical transmembrane passes span 341 to 361, 367 to 387, 437 to 457, 468 to 488, and 515 to 535; these read LELTVDYGFLWFIAQPIFWLL, LLGNWGWSIIVLTMLIKGLFF, LGGCLPILVQMPVFLALYWVL, WMLWITDLSIKDPFFILPIIM, and PIIFTFFFLWFPAGLVLYWVV.

The protein belongs to the OXA1/ALB3/YidC family. Type 1 subfamily. In terms of assembly, interacts with the Sec translocase complex via SecD. Specifically interacts with transmembrane segments of nascent integral membrane proteins during membrane integration.

Its subcellular location is the cell inner membrane. Functionally, required for the insertion and/or proper folding and/or complex formation of integral membrane proteins into the membrane. Involved in integration of membrane proteins that insert both dependently and independently of the Sec translocase complex, as well as at least some lipoproteins. Aids folding of multispanning membrane proteins. This is Membrane protein insertase YidC from Pseudomonas putida (strain W619).